Reading from the N-terminus, the 433-residue chain is Bifunctional protein GlmU (433 aa).

Positions 1-226 (MLSVIILAAG…EECFLGVNSQ (226 aa)) are pyrophosphorylase. UDP-N-acetyl-alpha-D-glucosamine is bound by residues 7–10 (LAAG), lysine 21, and 80–81 (GT). A Mg(2+)-binding site is contributed by aspartate 106. UDP-N-acetyl-alpha-D-glucosamine-binding residues include glycine 138, glutamate 152, asparagine 167, and asparagine 224. Asparagine 224 contacts Mg(2+). A linker region spans residues 227 to 247 (TERAKAEEIMLERLRKNAMDL). Positions 248-433 (GVVMQLPSSI…NGYFKFFKKP (186 aa)) are N-acetyltransferase. UDP-N-acetyl-alpha-D-glucosamine is bound by residues arginine 311 and lysine 328. The active-site Proton acceptor is histidine 339. Positions 342 and 353 each coordinate UDP-N-acetyl-alpha-D-glucosamine. Residues alanine 356, 362–363 (NY), serine 381, serine 399, and arginine 416 each bind acetyl-CoA.

This sequence in the N-terminal section; belongs to the N-acetylglucosamine-1-phosphate uridyltransferase family. In the C-terminal section; belongs to the transferase hexapeptide repeat family. As to quaternary structure, homotrimer. The cofactor is Mg(2+).

It localises to the cytoplasm. It carries out the reaction alpha-D-glucosamine 1-phosphate + acetyl-CoA = N-acetyl-alpha-D-glucosamine 1-phosphate + CoA + H(+). The enzyme catalyses N-acetyl-alpha-D-glucosamine 1-phosphate + UTP + H(+) = UDP-N-acetyl-alpha-D-glucosamine + diphosphate. It participates in nucleotide-sugar biosynthesis; UDP-N-acetyl-alpha-D-glucosamine biosynthesis; N-acetyl-alpha-D-glucosamine 1-phosphate from alpha-D-glucosamine 6-phosphate (route II): step 2/2. It functions in the pathway nucleotide-sugar biosynthesis; UDP-N-acetyl-alpha-D-glucosamine biosynthesis; UDP-N-acetyl-alpha-D-glucosamine from N-acetyl-alpha-D-glucosamine 1-phosphate: step 1/1. The protein operates within bacterial outer membrane biogenesis; LPS lipid A biosynthesis. In terms of biological role, catalyzes the last two sequential reactions in the de novo biosynthetic pathway for UDP-N-acetylglucosamine (UDP-GlcNAc). The C-terminal domain catalyzes the transfer of acetyl group from acetyl coenzyme A to glucosamine-1-phosphate (GlcN-1-P) to produce N-acetylglucosamine-1-phosphate (GlcNAc-1-P), which is converted into UDP-GlcNAc by the transfer of uridine 5-monophosphate (from uridine 5-triphosphate), a reaction catalyzed by the N-terminal domain. This is Bifunctional protein GlmU from Helicobacter pylori (strain HPAG1).